The sequence spans 272 residues: Indole-3-glycerol phosphate synthase (272 aa).

Belongs to the TrpC family.

The enzyme catalyses 1-(2-carboxyphenylamino)-1-deoxy-D-ribulose 5-phosphate + H(+) = (1S,2R)-1-C-(indol-3-yl)glycerol 3-phosphate + CO2 + H2O. It participates in amino-acid biosynthesis; L-tryptophan biosynthesis; L-tryptophan from chorismate: step 4/5. The sequence is that of Indole-3-glycerol phosphate synthase from Mycobacterium sp. (strain JLS).